A 371-amino-acid chain; its full sequence is uncharacterized protein (371 aa).

This is an uncharacterized protein from Rickettsia prowazekii (strain Madrid E).